Here is a 391-residue protein sequence, read N- to C-terminus: Galactokinase (391 aa).

34-37 (EHTD) contributes to the substrate binding site. 121 to 127 (GAGLSSS) serves as a coordination point for ATP. Mg(2+) contacts are provided by S127 and E159. D171 serves as the catalytic Proton acceptor. Y220 lines the substrate pocket.

The protein belongs to the GHMP kinase family. GalK subfamily.

It is found in the cytoplasm. The catalysed reaction is alpha-D-galactose + ATP = alpha-D-galactose 1-phosphate + ADP + H(+). Its pathway is carbohydrate metabolism; galactose metabolism. Its function is as follows. Catalyzes the transfer of the gamma-phosphate of ATP to D-galactose to form alpha-D-galactose-1-phosphate (Gal-1-P). The chain is Galactokinase from Roseiflexus sp. (strain RS-1).